The primary structure comprises 507 residues: RNA-binding protein Nova-1 (507 aa).

The segment at 1–44 (MMAAAPIQQNGTHTGVPIDLDPPDSRKRPLEAPPEAGSTKRTNT) is disordered. The Bipartite nuclear localization signal motif lies at 27 to 43 (KRPLEAPPEAGSTKRTN). Residues 49–116 (QYFLKVLIPS…EALNAVHGFI (68 aa)) form the KH 1 domain. The interval 139–171 (QTTVNPDRIKQTLPSSPTTTKSSPSDPMTTSRA) is disordered. Residues 150-169 (TLPSSPTTTKSSPSDPMTTS) show a composition bias toward low complexity. Residue Ser154 is modified to Phosphoserine. KH domains follow at residues 171–237 (ANQV…VELI) and 421–488 (KDVV…QYLI). Residues 419-503 (GSKDVVEIAV…YEQGVRAANP (85 aa)) form a required for RNA binding region.

In terms of assembly, interacts with PTBP2; the interaction is direct. Expressed in cerebellum, brain stem, hippocampus, and frontal cortex.

The protein resides in the nucleus. In terms of biological role, functions to regulate alternative splicing in neurons by binding pre-mRNA in a sequence-specific manner to activate exon inclusion or exclusion. It binds specifically to the sequences 5'-YCAY-3' and regulates splicing in only a subset of regulated exons. Binding to an exonic 5'-YCAY-3' cluster changes the protein complexes assembled on pre-mRNA, blocking U1 snRNP binding and exon inclusion, whereas binding to an intronic 5'-YCAY-3' cluster enhances spliceosome assembly and exon inclusion. Binding to 5'-YCAY-3' clusters results in a local and asymmetric action to regulate spliceosome assembly and alternative splicing in neurons. Binding to an exonic 5'-YCAY-3' cluster changed the protein complexes assembled on pre-mRNA, blocking U1 snRNP (small nuclear ribonucleoprotein) binding and exon inclusion, whereas binding to an intronic 5'-YCAY-3' cluster enhanced spliceosome assembly and exon inclusion. With NOVA1, they perform unique biological functions in different brain areas and cell types. Autoregulates its own expression by acting as a splicing repressor. Acts to activate the inclusion of exon E3A in the glycine receptor alpha-2 chain and of exon E9 in gamma-aminobutyric-acid receptor gamma-2 subunit via a distal downstream UCAU-rich intronic splicing enhancer. Acts to regulate a novel glycine receptor alpha-2 chain splice variant (alpha-2N) in developing spinal cord. The chain is RNA-binding protein Nova-1 from Homo sapiens (Human).